The following is a 129-amino-acid chain: D-ribose pyranase (129 aa).

His-20 serves as the catalytic Proton donor. Substrate contacts are provided by residues Asp-28, His-96, and 118–120 (YAN).

The protein belongs to the RbsD / FucU family. RbsD subfamily. Homodecamer.

The protein resides in the cytoplasm. It carries out the reaction beta-D-ribopyranose = beta-D-ribofuranose. The protein operates within carbohydrate metabolism; D-ribose degradation; D-ribose 5-phosphate from beta-D-ribopyranose: step 1/2. Catalyzes the interconversion of beta-pyran and beta-furan forms of D-ribose. This is D-ribose pyranase from Exiguobacterium sibiricum (strain DSM 17290 / CCUG 55495 / CIP 109462 / JCM 13490 / 255-15).